Reading from the N-terminus, the 1234-residue chain is Anion exchange protein 2 (1234 aa).

The segment at 1–239 (MSSAPRRPAS…YNLQERRRIG (239 aa)) is disordered. Over 1–704 (MSSAPRRPAS…SDFRDALDPQ (704 aa)) the chain is Cytoplasmic. Composition is skewed to basic and acidic residues over residues 39 to 49 (LRTLGVERFEE) and 58 to 75 (GGEE…EYHR). Basic residues-rich tracts occupy residues 76 to 85 (QSSHHIHHPL) and 94 to 110 (RRRK…RRRP). Phosphoserine is present on Ser113. Positions 120-133 (TIEEGEEDEDEVGE) are enriched in acidic residues. Phosphoserine is present on residues Ser145, Ser171, and Ser173. Over residues 207-216 (TAGGDDGGAA) the composition is skewed to gly residues. Ser240 is subject to Phosphoserine. Position 254 is a phosphothreonine (Thr254). An N6-methyllysine modification is found at Lys271. Residues 287 to 315 (RKNAKGSTQAAREGREPGPTPRARPRAPH) form a disordered region. Ser440 is modified (phosphoserine). The segment at 446–467 (SLLGHHHAQGTESDPHVTEPLI) is disordered. 4 consecutive transmembrane segments (helical) span residues 705-728 (CLAA…GLLG), 734-771 (LIGV…LLVF), 791-813 (VWIG…SFLV), and 823-843 (IFAF…LIKI). Residues 705–1234 (CLAAVIFIYF…DEYNEMPMPV (530 aa)) form a membrane (anion exchange) region. Topologically, residues 844 to 893 (FQEHPLHGCSVSNDSEADSSSNNMTWAATTLAPDNSSASGQERPRGQPNT) are extracellular. N-linked (GlcNAc...) asparagine glycans are attached at residues Asn856, Asn866, and Asn878. The chain crosses the membrane as a helical span at residues 894-911 (ALLSLVLMAGTFFIAFFL). The Cytoplasmic portion of the chain corresponds to 912 to 926 (RKFKNSRFFPGRIRR). 5 consecutive transmembrane segments (helical) span residues 927–947 (VIGD…DYSI), 981–1003 (PFPV…LIFM), 1029–1050 (LLLI…LAAA), 1084–1129 (VTGL…IQFY), and 1156–1192 (MHLF…TVPL). Cys1166 carries S-palmitoyl cysteine lipidation.

Belongs to the anion exchanger (TC 2.A.31) family. In terms of tissue distribution, expressed in the parotid and submandibular glands (at protein level). Expressed in the gastric mucosa (at protein level). Expressed in the choroid plexus epithelium (at protein level). Expressed in the liver and gallbladder.

The protein localises to the apical cell membrane. It is found in the basolateral cell membrane. It carries out the reaction hydrogencarbonate(in) + chloride(out) = hydrogencarbonate(out) + chloride(in). With respect to regulation, inhibited by 4,4'-diisothiocyanatostilbene-2,2'-disulfonic acid (DIDS). Sodium-independent anion exchanger which mediates the electroneutral exchange of chloride for bicarbonate ions across the cell membrane. Plays an important role in osteoclast differentiation and function. Regulates bone resorption and calpain-dependent actin cytoskeleton organization in osteoclasts via anion exchange-dependent control of pH. Essential for intracellular pH regulation in CD8(+) T-cells upon CD3 stimulation, modulating CD8(+) T-cell responses. The chain is Anion exchange protein 2 (Slc4a2) from Rattus norvegicus (Rat).